The chain runs to 144 residues: Pleckstrin homology-like domain family A member 2 (144 aa).

In terms of domain architecture, PH spans 18–111 (ILCEGELEKR…AAITMALIDF (94 aa)). Ser140 is modified (phosphoserine).

Belongs to the PHLDA2 family. Specifically expressed at high levels in extraembryonic tissues in the developing conceptus (at protein level). Expressed in placenta and yolc sac. Expressed at low levels in fetal liver and kidney.

The protein localises to the cytoplasm. Its subcellular location is the membrane. In terms of biological role, plays a role in regulating placenta growth. May act via its PH domain that competes with other PH domain-containing proteins, thereby preventing their binding to membrane lipids. The sequence is that of Pleckstrin homology-like domain family A member 2 (Phlda2) from Mus musculus (Mouse).